The primary structure comprises 426 residues: Glucose-6-phosphate isomerase (426 aa).

The Proton donor role is filled by E282. Residues H303 and K419 contribute to the active site.

This sequence belongs to the GPI family.

It localises to the cytoplasm. It catalyses the reaction alpha-D-glucose 6-phosphate = beta-D-fructose 6-phosphate. It participates in carbohydrate biosynthesis; gluconeogenesis. Its pathway is carbohydrate degradation; glycolysis; D-glyceraldehyde 3-phosphate and glycerone phosphate from D-glucose: step 2/4. Its function is as follows. Catalyzes the reversible isomerization of glucose-6-phosphate to fructose-6-phosphate. This is Glucose-6-phosphate isomerase from Mycoplasmoides gallisepticum (strain R(low / passage 15 / clone 2)) (Mycoplasma gallisepticum).